The chain runs to 139 residues: Nucleoside diphosphate kinase (139 aa).

Lys-10, Phe-58, Arg-86, Thr-92, Arg-103, and Asn-113 together coordinate ATP. Catalysis depends on His-116, which acts as the Pros-phosphohistidine intermediate.

The protein belongs to the NDK family. In terms of assembly, homotetramer. Requires Mg(2+) as cofactor.

It localises to the cytoplasm. The catalysed reaction is a 2'-deoxyribonucleoside 5'-diphosphate + ATP = a 2'-deoxyribonucleoside 5'-triphosphate + ADP. It carries out the reaction a ribonucleoside 5'-diphosphate + ATP = a ribonucleoside 5'-triphosphate + ADP. Functionally, major role in the synthesis of nucleoside triphosphates other than ATP. The ATP gamma phosphate is transferred to the NDP beta phosphate via a ping-pong mechanism, using a phosphorylated active-site intermediate. This is Nucleoside diphosphate kinase from Nitratidesulfovibrio vulgaris (strain ATCC 29579 / DSM 644 / CCUG 34227 / NCIMB 8303 / VKM B-1760 / Hildenborough) (Desulfovibrio vulgaris).